The primary structure comprises 150 residues: Large-conductance mechanosensitive channel (150 aa).

2 consecutive transmembrane segments (helical) span residues 14–34 (VIDLAVGVIIGGAFGKIVTSL) and 81–101 (GLFINNVVDFLIIAFTIFIVI).

Belongs to the MscL family. In terms of assembly, homopentamer.

The protein localises to the cell membrane. Channel that opens in response to stretch forces in the membrane lipid bilayer. May participate in the regulation of osmotic pressure changes within the cell. This chain is Large-conductance mechanosensitive channel, found in Desulfitobacterium hafniense (strain DSM 10664 / DCB-2).